Here is a 232-residue protein sequence, read N- to C-terminus: Flagellar L-ring protein (232 aa).

The signal sequence occupies residues 1–21; the sequence is MQKNAAHTYAISSLLVLSLTG. A lipid anchor (N-palmitoyl cysteine) is attached at Cys-22. A lipid anchor (S-diacylglycerol cysteine) is attached at Cys-22.

This sequence belongs to the FlgH family. As to quaternary structure, the basal body constitutes a major portion of the flagellar organelle and consists of four rings (L,P,S, and M) mounted on a central rod.

It localises to the cell outer membrane. Its subcellular location is the bacterial flagellum basal body. In terms of biological role, assembles around the rod to form the L-ring and probably protects the motor/basal body from shearing forces during rotation. This chain is Flagellar L-ring protein (flgH), found in Shigella flexneri.